Reading from the N-terminus, the 299-residue chain is 21S rRNA pseudouridine(2819) synthase (299 aa).

Residue aspartate 106 is part of the active site.

This sequence belongs to the pseudouridine synthase RluA family.

Its subcellular location is the mitochondrion. It catalyses the reaction uridine(2819) in 21S rRNA = pseudouridine(2819) in 21S rRNA. Its function is as follows. Pseudouridylate synthase responsible for the pseudouridine-2819 formation in mitochondrial 21S rRNA. May modulate the efficiency or the fidelity of the mitochondrial translation machinery. In Kluyveromyces lactis (strain ATCC 8585 / CBS 2359 / DSM 70799 / NBRC 1267 / NRRL Y-1140 / WM37) (Yeast), this protein is 21S rRNA pseudouridine(2819) synthase (PUS5).